A 617-amino-acid chain; its full sequence is Electron transfer flavoprotein-ubiquinone oxidoreductase, mitochondrial (617 aa).

The N-terminal 33 residues, 1 to 33 (MLVPLAKLSCPAYQCFHALKIKKNYLPLCATRW), are a transit peptide targeting the mitochondrion. Position 71–85 (71–85 (VVIVGAGPAGLSAAV)) interacts with FAD. At Lys96 the chain carries N6-acetyllysine. An intramembrane segment occupies 109-130 (IGAHTLSGACLDPGAFKELFPD). Lys132 and Lys223 each carry N6-acetyllysine. Gly305 and Gly306 together coordinate a ubiquinone. An N6-acetyllysine modification is found at Lys357. Residues 428–447 (MGLHVTEYEDNLKNSWVWKE) lie within the membrane without spanning it. Phosphoserine is present on Ser551. Positions 561, 586, 589, and 592 each coordinate [4Fe-4S] cluster. In terms of domain architecture, 4Fe-4S ferredoxin-type spans 577-606 (FRLQINAQNCVHCKTCDIKDPSQNINWVVP).

The protein belongs to the ETF-QO/FixC family. As to quaternary structure, monomer. [4Fe-4S] cluster is required as a cofactor. It depends on FAD as a cofactor.

The protein resides in the mitochondrion inner membrane. It catalyses the reaction a ubiquinone + reduced [electron-transfer flavoprotein] = a ubiquinol + oxidized [electron-transfer flavoprotein] + H(+). Accepts electrons from ETF and reduces ubiquinone. The polypeptide is Electron transfer flavoprotein-ubiquinone oxidoreductase, mitochondrial (ETFDH) (Pongo abelii (Sumatran orangutan)).